Here is a 220-residue protein sequence, read N- to C-terminus: Protein GrpE (220 aa).

Residues 1–22 (MSDEKNKFTDASFENCDLKNPS) form a disordered region.

It belongs to the GrpE family. As to quaternary structure, homodimer.

The protein resides in the cytoplasm. Its function is as follows. Participates actively in the response to hyperosmotic and heat shock by preventing the aggregation of stress-denatured proteins, in association with DnaK and GrpE. It is the nucleotide exchange factor for DnaK and may function as a thermosensor. Unfolded proteins bind initially to DnaJ; upon interaction with the DnaJ-bound protein, DnaK hydrolyzes its bound ATP, resulting in the formation of a stable complex. GrpE releases ADP from DnaK; ATP binding to DnaK triggers the release of the substrate protein, thus completing the reaction cycle. Several rounds of ATP-dependent interactions between DnaJ, DnaK and GrpE are required for fully efficient folding. This Bartonella henselae (strain ATCC 49882 / DSM 28221 / CCUG 30454 / Houston 1) (Rochalimaea henselae) protein is Protein GrpE.